A 187-amino-acid polypeptide reads, in one-letter code: NADPH-dependent 3-demethoxyubiquinone 3-hydroxylase, mitochondrial (187 aa).

Residues 1 to 8 (MFRVITRG) constitute a mitochondrion transit peptide. Position 21 (Lys21) interacts with NADH. 2 repeat units span residues 28–99 (AGEL…SALL) and 100–187 (GKEG…AEKI). Residues 28–187 (AGELGADRIY…KGAIAIAEKI (160 aa)) form a 2 X approximate tandem repeats region. Fe cation-binding residues include Glu30, Glu60, His63, Glu112, Glu148, and His151. Lys186 contacts NADH.

It belongs to the COQ7 family. Component of a multi-subunit COQ enzyme complex. Fe cation is required as a cofactor.

Its subcellular location is the mitochondrion inner membrane. The protein localises to the mitochondrion. The protein resides in the nucleus. It catalyses the reaction a 5-methoxy-2-methyl-3-(all-trans-polyprenyl)benzoquinone + NADH + O2 = a 3-demethylubiquinone + NAD(+) + H2O. Its pathway is cofactor biosynthesis; ubiquinone biosynthesis. Functionally, catalyzes the hydroxylation of the 5-methoxy-2-methyl-3-(all-trans-polyprenyl)benzoquinone at the C6 position and participates in the biosynthesis of ubiquinone. Catalyzes the reaction through a substrate-mediated reduction pathway, whereby NADH shuttles electrons to 5-methoxy-2-methyl-3-(all-trans-decaprenyl)benzoquinone, which then transfers the electrons to the two Fe(3+) centers. The binding of 5-methoxy-2-methyl-3-(all-trans-polyprenyl)benzoquinone (DMQn) mediates reduction of the diiron center by nicotinamide adenine dinucleotide (NADH) and initiates oxygen activation for subsequent DMQ hydroxylation. Also has a structural role in the COQ enzyme complex, stabilizing other COQ polypeptides. Involved in lifespan determination in a ubiquinone-independent manner. Plays a role in modulating mitochondrial stress responses, acting in the nucleus, perhaps via regulating gene expression, independent of its characterized mitochondrial function in ubiquinone biosynthesis. Plays a role in modulating polyribosome formation. The protein is NADPH-dependent 3-demethoxyubiquinone 3-hydroxylase, mitochondrial of Caenorhabditis elegans.